The following is a 365-amino-acid chain: Pre-small/secreted glycoprotein (365 aa).

A signal peptide spans 1–32 (MGASGILQLPRERFRKTSFFVWVIILFHKVFS). N-linked (GlcNAc...) asparagine; by host glycosylation occurs at asparagine 40. 2 cysteine pairs are disulfide-bonded: cysteine 108/cysteine 135 and cysteine 121/cysteine 147. N-linked (GlcNAc...) asparagine; by host glycans are attached at residues asparagine 204, asparagine 228, asparagine 257, and asparagine 268.

This sequence belongs to the filoviruses glycoprotein family. In terms of assembly, homodimer; disulfide-linked. The homodimers are linked by two disulfide bonds in a parallel orientation. As to quaternary structure, monomer. In terms of processing, this precursor is processed into mature sGP and delta-peptide by host furin or furin-like proteases. The cleavage site corresponds to the furin optimal cleavage sequence [KR]-X-[KR]-R. Post-translationally, N-glycosylated. O-glycosylated.

It localises to the secreted. In terms of biological role, seems to possess an anti-inflammatory activity as it can reverse the barrier-decreasing effects of TNF alpha. Might therefore contribute to the lack of inflammatory reaction seen during infection in spite the of extensive necrosis and massive virus production. Does not seem to be involved in activation of primary macrophages. Does not seem to interact specifically with neutrophils. Viroporin that permeabilizes mammalian cell plasma membranes. It acts by altering permeation of ionic compounds and small molecules. This activity may lead to viral enterotoxic activity. The protein is Pre-small/secreted glycoprotein (GP) of Epomops franqueti (Franquet's epauletted fruit bat).